Here is an 819-residue protein sequence, read N- to C-terminus: Lon protease (819 aa).

The span at 1–14 (MNSTNNTDSQNLDP) shows a compositional bias: polar residues. The interval 1–40 (MNSTNNTDSQNLDPNASEVEKLLDESAEAEEKVDDHTPPS) is disordered. Positions 18-38 (EVEKLLDESAEAEEKVDDHTP) are enriched in basic and acidic residues. In terms of domain architecture, Lon N-terminal spans 42 to 239 (LFILPLNKRP…KALVLLKKEL (198 aa)). Residue 392 to 399 (GPPGVGKT) coordinates ATP. The 185-residue stretch at 634 to 818 (KTPVGVATGL…DDVFKIAFPG (185 aa)) folds into the Lon proteolytic domain. Catalysis depends on residues Ser-724 and Lys-767.

It belongs to the peptidase S16 family. In terms of assembly, homohexamer. Organized in a ring with a central cavity.

It localises to the cytoplasm. It carries out the reaction Hydrolysis of proteins in presence of ATP.. Functionally, ATP-dependent serine protease that mediates the selective degradation of mutant and abnormal proteins as well as certain short-lived regulatory proteins. Required for cellular homeostasis and for survival from DNA damage and developmental changes induced by stress. Degrades polypeptides processively to yield small peptide fragments that are 5 to 10 amino acids long. Binds to DNA in a double-stranded, site-specific manner. This is Lon protease from Chlamydia trachomatis serovar D (strain ATCC VR-885 / DSM 19411 / UW-3/Cx).